The chain runs to 173 residues: ATP synthase subunit delta (173 aa).

It belongs to the ATPase delta chain family. As to quaternary structure, F-type ATPases have 2 components, F(1) - the catalytic core - and F(0) - the membrane proton channel. F(1) has five subunits: alpha(3), beta(3), gamma(1), delta(1), epsilon(1). F(0) has three main subunits: a(1), b(2) and c(10-14). The alpha and beta chains form an alternating ring which encloses part of the gamma chain. F(1) is attached to F(0) by a central stalk formed by the gamma and epsilon chains, while a peripheral stalk is formed by the delta and b chains.

Its subcellular location is the cell inner membrane. Its function is as follows. F(1)F(0) ATP synthase produces ATP from ADP in the presence of a proton or sodium gradient. F-type ATPases consist of two structural domains, F(1) containing the extramembraneous catalytic core and F(0) containing the membrane proton channel, linked together by a central stalk and a peripheral stalk. During catalysis, ATP synthesis in the catalytic domain of F(1) is coupled via a rotary mechanism of the central stalk subunits to proton translocation. In terms of biological role, this protein is part of the stalk that links CF(0) to CF(1). It either transmits conformational changes from CF(0) to CF(1) or is implicated in proton conduction. The chain is ATP synthase subunit delta from Campylobacter jejuni subsp. jejuni serotype O:2 (strain ATCC 700819 / NCTC 11168).